A 425-amino-acid chain; its full sequence is Histidine--tRNA ligase (425 aa).

Belongs to the class-II aminoacyl-tRNA synthetase family. In terms of assembly, homodimer.

Its subcellular location is the cytoplasm. It catalyses the reaction tRNA(His) + L-histidine + ATP = L-histidyl-tRNA(His) + AMP + diphosphate + H(+). This Buchnera aphidicola subsp. Baizongia pistaciae (strain Bp) protein is Histidine--tRNA ligase.